The chain runs to 122 residues: Large ribosomal subunit protein uL14 (122 aa).

This sequence belongs to the universal ribosomal protein uL14 family. As to quaternary structure, part of the 50S ribosomal subunit. Forms a cluster with proteins L3 and L19. In the 70S ribosome, L14 and L19 interact and together make contacts with the 16S rRNA in bridges B5 and B8.

In terms of biological role, binds to 23S rRNA. Forms part of two intersubunit bridges in the 70S ribosome. This is Large ribosomal subunit protein uL14 from Campylobacter concisus (strain 13826).